Here is a 197-residue protein sequence, read N- to C-terminus: Phosphoheptose isomerase (197 aa).

Positions 40 to 197 (CIASIAQGGK…LVEHSIFGKQ (158 aa)) constitute an SIS domain. 55–57 (NGG) provides a ligand contact to substrate. Zn(2+) contacts are provided by His64 and Glu68. Residues Glu68, 97 to 98 (ND), 123 to 125 (STS), Ser128, and Gln175 contribute to the substrate site. Residues Gln175 and His183 each contribute to the Zn(2+) site.

This sequence belongs to the SIS family. GmhA subfamily. Homotetramer. Zn(2+) is required as a cofactor.

It is found in the cytoplasm. The enzyme catalyses 2 D-sedoheptulose 7-phosphate = D-glycero-alpha-D-manno-heptose 7-phosphate + D-glycero-beta-D-manno-heptose 7-phosphate. Its pathway is carbohydrate biosynthesis; D-glycero-D-manno-heptose 7-phosphate biosynthesis; D-glycero-alpha-D-manno-heptose 7-phosphate and D-glycero-beta-D-manno-heptose 7-phosphate from sedoheptulose 7-phosphate: step 1/1. It functions in the pathway capsule biogenesis; capsule polysaccharide biosynthesis. Functionally, catalyzes the isomerization of sedoheptulose 7-phosphate in D-glycero-D-manno-heptose 7-phosphate. The chain is Phosphoheptose isomerase from Burkholderia mallei (strain ATCC 23344).